Reading from the N-terminus, the 1408-residue chain is ARF guanine-nucleotide exchange factor 1 (1408 aa).

The residue at position 49 (Ser49) is a Phosphoserine. The segment at Thr262–Pro287 is disordered. Residues Phe552–Asn706 form the SEC7 domain.

Interacts (via N-terminal region) with SEC21 (via C-terminus). Interacts with GMH1. Interacts with DRS2.

Its subcellular location is the cytoplasm. It localises to the cytosol. The protein resides in the membrane. The protein localises to the endoplasmic reticulum. It is found in the mitochondrion. Its function is as follows. Activates the ARF proteins by exchanging bound GDP for free GTP. Plays a role in maintaining mitochondrial morphology, and in the turnover of mitochondria through mitophagy. This chain is ARF guanine-nucleotide exchange factor 1 (GEA1), found in Saccharomyces cerevisiae (strain ATCC 204508 / S288c) (Baker's yeast).